The chain runs to 221 residues: MGQKVHPYGLRVGVTKDWLAKWYAKDKDFPNILVEDIKIRNYIKEKLYAAGIPQIVIERASNRIKIDIYAAKPGMVIGKGGTGVDRLREELEKMTNKTVILNIIEVKTPELSAQLVAENIAAQIEKRISYRRAMKQAIARAMKLGAKGIKIACSGRLAGAEIARTERYHEGVVPLQTLRADIDYGFAEANTTYGKIGVKVWINKGEILPQPKKQVTAEGGK.

A KH type-2 domain is found at 39–107; that stretch reads IRNYIKEKLY…TVILNIIEVK (69 aa).

Belongs to the universal ribosomal protein uS3 family. As to quaternary structure, part of the 30S ribosomal subunit. Forms a tight complex with proteins S10 and S14.

In terms of biological role, binds the lower part of the 30S subunit head. Binds mRNA in the 70S ribosome, positioning it for translation. This is Small ribosomal subunit protein uS3 from Caldanaerobacter subterraneus subsp. tengcongensis (strain DSM 15242 / JCM 11007 / NBRC 100824 / MB4) (Thermoanaerobacter tengcongensis).